A 452-amino-acid chain; its full sequence is UDP-N-acetylmuramate--L-alanine ligase (452 aa).

121–127 (GTHGKTT) is an ATP binding site.

The protein belongs to the MurCDEF family.

The protein resides in the cytoplasm. The enzyme catalyses UDP-N-acetyl-alpha-D-muramate + L-alanine + ATP = UDP-N-acetyl-alpha-D-muramoyl-L-alanine + ADP + phosphate + H(+). It functions in the pathway cell wall biogenesis; peptidoglycan biosynthesis. Its function is as follows. Cell wall formation. This chain is UDP-N-acetylmuramate--L-alanine ligase, found in Christiangramia forsetii (strain DSM 17595 / CGMCC 1.15422 / KT0803) (Gramella forsetii).